A 176-amino-acid chain; its full sequence is Large ribosomal subunit protein uL10 (176 aa).

It belongs to the universal ribosomal protein uL10 family. Part of the ribosomal stalk of the 50S ribosomal subunit. The N-terminus interacts with L11 and the large rRNA to form the base of the stalk. The C-terminus forms an elongated spine to which L12 dimers bind in a sequential fashion forming a multimeric L10(L12)X complex.

Its function is as follows. Forms part of the ribosomal stalk, playing a central role in the interaction of the ribosome with GTP-bound translation factors. In Hahella chejuensis (strain KCTC 2396), this protein is Large ribosomal subunit protein uL10.